A 178-amino-acid polypeptide reads, in one-letter code: ATP synthase subunit delta (178 aa).

It belongs to the ATPase delta chain family. In terms of assembly, F-type ATPases have 2 components, F(1) - the catalytic core - and F(0) - the membrane proton channel. F(1) has five subunits: alpha(3), beta(3), gamma(1), delta(1), epsilon(1). F(0) has three main subunits: a(1), b(2) and c(10-14). The alpha and beta chains form an alternating ring which encloses part of the gamma chain. F(1) is attached to F(0) by a central stalk formed by the gamma and epsilon chains, while a peripheral stalk is formed by the delta and b chains.

The protein resides in the cell inner membrane. Functionally, f(1)F(0) ATP synthase produces ATP from ADP in the presence of a proton or sodium gradient. F-type ATPases consist of two structural domains, F(1) containing the extramembraneous catalytic core and F(0) containing the membrane proton channel, linked together by a central stalk and a peripheral stalk. During catalysis, ATP synthesis in the catalytic domain of F(1) is coupled via a rotary mechanism of the central stalk subunits to proton translocation. This protein is part of the stalk that links CF(0) to CF(1). It either transmits conformational changes from CF(0) to CF(1) or is implicated in proton conduction. The protein is ATP synthase subunit delta of Pseudomonas putida (strain ATCC 700007 / DSM 6899 / JCM 31910 / BCRC 17059 / LMG 24140 / F1).